Reading from the N-terminus, the 260-residue chain is Activator of 90 kDa heat shock protein ATPase homolog 2 (260 aa).

The protein belongs to the AHA1 family.

Functionally, co-chaperone that stimulates HSP90 ATPase activity. The chain is Activator of 90 kDa heat shock protein ATPase homolog 2 (AHSA2) from Bos taurus (Bovine).